Here is a 181-residue protein sequence, read N- to C-terminus: ADP-ribosylation factor-like protein 1 (181 aa).

The N-myristoyl glycine moiety is linked to residue G2. GTP is bound by residues G24 to T31, T45 to T48, G70, N126 to D129, and A160 to T161. Residues T31 and T48 each coordinate Mg(2+).

The protein belongs to the small GTPase superfamily. Arf family. As to quaternary structure, the GTP-bound form interacts with GOLGA1. The GTP-bound form interacts with GOLGA4 and RGPD8. The GTP-bound form directly interacts with ARFIP2. Binds to SCOC, preferentially in its GTP-bound form. May interact with UNC119. Interacts with ARFIP1; this interaction directs ARFIP1 to the trans-Golgi membranes. Interacts with ARFGEF1 (via N-terminus).

It localises to the golgi apparatus membrane. The protein resides in the golgi apparatus. It is found in the trans-Golgi network membrane. Its subcellular location is the membrane. In terms of biological role, GTP-binding protein that recruits several effectors, such as golgins, arfaptins and Arf-GEFs to the trans-Golgi network, and modulates their functions at the Golgi complex. Plays thereby a role in a wide range of fundamental cellular processes, including cell polarity, innate immunity, or protein secretion mediated by arfaptins, which were shown to play a role in maintaining insulin secretion from pancreatic beta cells. This Bos taurus (Bovine) protein is ADP-ribosylation factor-like protein 1 (ARL1).